Here is a 534-residue protein sequence, read N- to C-terminus: SWI/SNF complex component SNF12 homolog (534 aa).

Positions 1 to 12 are enriched in polar residues; the sequence is MSGNNNNPQKPQ. 2 disordered regions span residues 1 to 33 and 78 to 132; these read MSGNNNNPQKPQGSAPLPFGNPGMASASVPGNQ and MTMN…SPMR. The span at 94 to 105 shows a compositional bias: low complexity; the sequence is PSSPSLTTPGSL. Positions 314 to 391 constitute an SWIB/MDM2 domain; the sequence is YVPEKFKLST…SQKISHHLSP (78 aa).

The protein belongs to the SMARCD family. In terms of assembly, part of a SWI-SNF complex.

Its subcellular location is the nucleus. In terms of biological role, involved in transcriptional activation and repression of select genes by chromatin remodeling (alteration of DNA-nucleosome topology). The chain is SWI/SNF complex component SNF12 homolog from Arabidopsis thaliana (Mouse-ear cress).